The following is a 982-amino-acid chain: Mitochondrial DNA mismatch repair protein mutS homolog (982 aa).

Position 698 to 705 (698 to 705 (SVNGAGKS)) interacts with ATP. An HNH domain is found at 905 to 951 (CEICGAPADAVHHIKPKSEHKKLCNRKLNRRSNLVPVCSSCHLDIHR).

It belongs to the DNA mismatch repair MutS family.

Its subcellular location is the mitochondrion. Functionally, may be involved in DNA-mismatch repair. The polypeptide is Mitochondrial DNA mismatch repair protein mutS homolog (Sarcophyton glaucum (Toadstool umbrella leather coral)).